The following is a 169-amino-acid chain: ATP synthase subunit b, sodium ion specific (169 aa).

A helical membrane pass occupies residues 5 to 27 (SFISLDWGVVFQIVNTIVMYLIL).

Belongs to the ATPase B chain family. F-type ATPases have 2 components, F(1) - the catalytic core - and F(0) - the membrane proton channel. F(1) has five subunits: alpha(3), beta(3), gamma(1), delta(1), epsilon(1). F(0) has three main subunits: a(1), b(2) and c(10-14). The alpha and beta chains form an alternating ring which encloses part of the gamma chain. F(1) is attached to F(0) by a central stalk formed by the gamma and epsilon chains, while a peripheral stalk is formed by the delta and b chains.

The protein resides in the cell membrane. Functionally, f(1)F(0) ATP synthase produces ATP from ADP in the presence of a proton or sodium gradient. F-type ATPases consist of two structural domains, F(1) containing the extramembraneous catalytic core and F(0) containing the membrane proton channel, linked together by a central stalk and a peripheral stalk. During catalysis, ATP synthesis in the catalytic domain of F(1) is coupled via a rotary mechanism of the central stalk subunits to proton translocation. Component of the F(0) channel, it forms part of the peripheral stalk, linking F(1) to F(0). Its function is as follows. In this organism this enzyme may function as an ATP-driven Na(+) ion pump to generate a Na(+) ion electrochemical gradient rather than as an ATP synthase. The protein is ATP synthase subunit b, sodium ion specific (atpF) of Clostridium paradoxum.